A 202-amino-acid chain; its full sequence is MSRYRGPRLRVTRRLGELPGLTRKASKKSNPPGQHGQARRKRSEYAIRLEEKQKLRFNYGVSERQLVRYVKKARAQEGSTGTNLLRLLENRLDNVCFRLGFGGTIPGSRQLVNHGHVTVNGKVLDIAGYQCKSGDVISIKEKKASKKLVEGNIEFPGLANVPPHIELDKPKLTGKINGKCDREWVALEINELLVVEYYSRKV.

Residues 1-13 (MSRYRGPRLRVTR) are compositionally biased toward basic residues. Residues 1–42 (MSRYRGPRLRVTRRLGELPGLTRKASKKSNPPGQHGQARRKR) form a disordered region. Residues 90–152 (NRLDNVCFRL…KASKKLVEGN (63 aa)) enclose the S4 RNA-binding domain.

This sequence belongs to the universal ribosomal protein uS4 family. Part of the 30S ribosomal subunit. Contacts protein S5. The interaction surface between S4 and S5 is involved in control of translational fidelity.

Functionally, one of the primary rRNA binding proteins, it binds directly to 16S rRNA where it nucleates assembly of the body of the 30S subunit. In terms of biological role, with S5 and S12 plays an important role in translational accuracy. This Prochlorococcus marinus (strain MIT 9515) protein is Small ribosomal subunit protein uS4.